Here is a 734-residue protein sequence, read N- to C-terminus: Photosystem I P700 chlorophyll a apoprotein A2 (734 aa).

Transmembrane regions (helical) follow at residues 46–69 (IFASHFGQLAVIFLWTSGNLFHVA), 135–158 (LYQGALFLLGLAAVSLAAGWLHLQ), 175–199 (LNHHLSGLFGVSSLAWSGHLVHVAI), 273–291 (IAHHHLAIAVLFIIAGHQY), 330–353 (LHFQLGLALASLGVITSLVAQHMY), 369–395 (AALYTHHQYIAGFIMSGAFAHGAIFFI), 417–439 (AIISHLSWASLFLGFHTLGLYVH), and 517–535 (FLVHHAIALGLHTTTLILV). Residues cysteine 559 and cysteine 568 each contribute to the [4Fe-4S] cluster site. A run of 2 helical transmembrane segments spans residues 575–596 (AFYLAIFWMLNTIGWVTFYWHW) and 643–665 (LSVWAWMFLFGHLIWATGFMFLI). 3 residues coordinate chlorophyll a: histidine 654, methionine 662, and tyrosine 670. Tryptophan 671 contacts phylloquinone. Residues 707–727 (LVGLAHFSVGYIFTYAAFLIA) form a helical membrane-spanning segment.

Belongs to the PsaA/PsaB family. As to quaternary structure, the PsaA/B heterodimer binds the P700 chlorophyll special pair and subsequent electron acceptors. PSI consists of a core antenna complex that captures photons, and an electron transfer chain that converts photonic excitation into a charge separation. The eukaryotic PSI reaction center is composed of at least 11 subunits. The cofactor is P700 is a chlorophyll a/chlorophyll a' dimer, A0 is one or more chlorophyll a, A1 is one or both phylloquinones and FX is a shared 4Fe-4S iron-sulfur center..

The protein resides in the plastid. Its subcellular location is the chloroplast thylakoid membrane. It catalyses the reaction reduced [plastocyanin] + hnu + oxidized [2Fe-2S]-[ferredoxin] = oxidized [plastocyanin] + reduced [2Fe-2S]-[ferredoxin]. Functionally, psaA and PsaB bind P700, the primary electron donor of photosystem I (PSI), as well as the electron acceptors A0, A1 and FX. PSI is a plastocyanin-ferredoxin oxidoreductase, converting photonic excitation into a charge separation, which transfers an electron from the donor P700 chlorophyll pair to the spectroscopically characterized acceptors A0, A1, FX, FA and FB in turn. Oxidized P700 is reduced on the lumenal side of the thylakoid membrane by plastocyanin. The sequence is that of Photosystem I P700 chlorophyll a apoprotein A2 from Chaetosphaeridium globosum (Charophycean green alga).